Reading from the N-terminus, the 110-residue chain is Large ribosomal subunit protein uL22 (110 aa).

The protein belongs to the universal ribosomal protein uL22 family. As to quaternary structure, part of the 50S ribosomal subunit.

This protein binds specifically to 23S rRNA; its binding is stimulated by other ribosomal proteins, e.g. L4, L17, and L20. It is important during the early stages of 50S assembly. It makes multiple contacts with different domains of the 23S rRNA in the assembled 50S subunit and ribosome. Its function is as follows. The globular domain of the protein is located near the polypeptide exit tunnel on the outside of the subunit, while an extended beta-hairpin is found that lines the wall of the exit tunnel in the center of the 70S ribosome. The protein is Large ribosomal subunit protein uL22 of Campylobacter fetus subsp. fetus (strain 82-40).